A 445-amino-acid polypeptide reads, in one-letter code: MKSLILTTLALLPLVSCKPWVQLSHQTPISADRNLIPGAAEKSQLDKIIADSELLSLHRSLTEIESISSREGDVGDFLVDYLQKHGFTVEKQHVSSDGNEADKMKPSSFNVYAYPRSSPAPEIILTSHIDTVPPFIPYSLSLPKSSSTGSIDRRAIHISGRGTVDDKGSVACQIIAILSHLKSHPDARLGLLFVVGEETGGQGMHHFSRSPLNTSPPTFHTVIFGEPTENKLVSGHKGMLQFTVSVHGKPAHSGYPWLGRSAVSEILPILSKIDQLGDIPESEGGLPSSEKYGKTTLNIGFMEGGVATNVVPARAFARVAVRLAGGTVEQAKERITAAVRSASREYRADVRLWFFSGGGYPPIDLDTDVEGFDILAVNYGTDVPNLMIHDHDQPEDKKVKRYLYGPGSIFSAHGENEGLSVGDMEDAVEGYGRLIRAAVERGQRK.

The signal sequence occupies residues 1 to 17; sequence MKSLILTTLALLPLVSC. Residue Asp-165 participates in Zn(2+) binding. Catalysis depends on Glu-197, which acts as the Proton acceptor. Glu-198 is a Zn(2+) binding site.

It belongs to the peptidase M20A family. It depends on Zn(2+) as a cofactor.

Its subcellular location is the secreted. This Uncinocarpus reesii (strain UAMH 1704) protein is Probable carboxypeptidase UREG_07869.